The sequence spans 248 residues: Probable transcriptional regulatory protein Ecaj_0351 (248 aa).

Residues methionine 1–arginine 21 form a disordered region.

It belongs to the TACO1 family.

The protein resides in the cytoplasm. This Ehrlichia canis (strain Jake) protein is Probable transcriptional regulatory protein Ecaj_0351.